Here is a 444-residue protein sequence, read N- to C-terminus: Cell division cycle 20.4, cofactor of APC complex (444 aa).

Residues 88 to 99 (LLSTNHSDSPHQ) show a composition bias toward polar residues. The tract at residues 88–108 (LLSTNHSDSPHQNPKPVKPRR) is disordered. 7 WD repeats span residues 124–161 (RDDFSLNLLDWGSANVLAIALGDTVYLWDASSGSTSEL), 166–205 (EDKGPVTSINWTQDGLDLAVGLDNSEVQLWDCVSNRQVRT), 209–246 (GHESRVGSLAWDNHILTTGGMDGKIVNNDVRIRSSIVE), 250–289 (GHTEEVCGLKWSESGNKQASGGNDNVVHIWDRSLASSKQT), 298–340 (EHTA…CLNS), 342–383 (ETGS…KMAE), and 386–425 (GHTSRVLFMAQSPNGCTVASAAGDENLRLWNVFGEPPKTT).

The protein belongs to the WD repeat CDC20/Fizzy family. As to quaternary structure, the APC/C is composed of at least 11 subunits that stay tightly associated throughout the cell cycle.

It is found in the cytoplasm. It participates in protein modification; protein ubiquitination. Functionally, component of the anaphase promoting complex/cyclosome (APC/C), a cell cycle-regulated E3 ubiquitin-protein ligase complex that controls progression through mitosis and the G1 phase of the cell cycle. In Arabidopsis thaliana (Mouse-ear cress), this protein is Cell division cycle 20.4, cofactor of APC complex (CDC20-4).